Reading from the N-terminus, the 262-residue chain is ATP synthase subunit delta (262 aa).

The protein belongs to the ATPase delta chain family. F-type ATPases have 2 components, F(1) - the catalytic core - and F(0) - the membrane proton channel. F(1) has five subunits: alpha(3), beta(3), gamma(1), delta(1), epsilon(1). F(0) has three main subunits: a(1), b(2) and c(10-14). The alpha and beta chains form an alternating ring which encloses part of the gamma chain. F(1) is attached to F(0) by a central stalk formed by the gamma and epsilon chains, while a peripheral stalk is formed by the delta and b chains.

It localises to the cell membrane. Functionally, f(1)F(0) ATP synthase produces ATP from ADP in the presence of a proton or sodium gradient. F-type ATPases consist of two structural domains, F(1) containing the extramembraneous catalytic core and F(0) containing the membrane proton channel, linked together by a central stalk and a peripheral stalk. During catalysis, ATP synthesis in the catalytic domain of F(1) is coupled via a rotary mechanism of the central stalk subunits to proton translocation. Its function is as follows. This protein is part of the stalk that links CF(0) to CF(1). It either transmits conformational changes from CF(0) to CF(1) or is implicated in proton conduction. The chain is ATP synthase subunit delta from Tropheryma whipplei (strain TW08/27) (Whipple's bacillus).